The sequence spans 25 residues: Xenoposin precursor fragment BM2 (25 aa).

In terms of tissue distribution, expressed by the skin glands.

The protein localises to the secreted. Its function is as follows. Antimicrobial peptide. The protein is Xenoposin precursor fragment BM2 of Xenopus boumbaensis (Mawa clawed frog).